A 559-amino-acid chain; its full sequence is Potassium-transporting ATPase potassium-binding subunit (559 aa).

Transmembrane regions (helical) follow at residues 6–26, 63–83, 131–151, 173–193, 253–273, 283–303, 327–347, 356–376, 379–399, 416–436, 484–504, and 524–544; these read FLLI…LGNV, LLAI…MLML, VGLT…IFAL, ITLW…IQQG, FVQM…FGDV, LLWA…WAEW, FGIL…CGAV, ALGG…FGGV, GLYG…LMIG, LTAL…ALAL, LLAF…MAIA, and GALF…LTFI.

The protein belongs to the KdpA family. In terms of assembly, the system is composed of three essential subunits: KdpA, KdpB and KdpC.

Its subcellular location is the cell inner membrane. Part of the high-affinity ATP-driven potassium transport (or Kdp) system, which catalyzes the hydrolysis of ATP coupled with the electrogenic transport of potassium into the cytoplasm. This subunit binds the periplasmic potassium ions and delivers the ions to the membrane domain of KdpB through an intramembrane tunnel. The protein is Potassium-transporting ATPase potassium-binding subunit of Enterobacter sp. (strain 638).